A 269-amino-acid chain; its full sequence is Acyl-CoA-binding domain-containing protein 4 (269 aa).

The 90-residue stretch at 12–101 folds into the ACB domain; that stretch reads CQKQFQAAVS…MKLVAQKVID (90 aa). An acyl-CoA contacts are provided by residues 23–32, 43–47, Lys-69, and Tyr-88; these read IQNLPKNGSY and YSYYK. 3 disordered regions span residues 150-175, 195-226, and 248-269; these read GAVS…PRDL, EQRA…QCSA, and VALP…SAAN. Residues 156–167 are compositionally biased toward pro residues; the sequence is PCLPKEPAPPSP. Ser-166 and Ser-171 each carry phosphoserine.

Binds medium- and long-chain acyl-CoA esters and may function as an intracellular carrier of acyl-CoA esters. The sequence is that of Acyl-CoA-binding domain-containing protein 4 (ACBD4) from Pongo abelii (Sumatran orangutan).